A 149-amino-acid polypeptide reads, in one-letter code: Nucleoside diphosphate kinase (149 aa).

Positions 9, 57, 85, 91, 102, and 112 each coordinate ATP. The active-site Pros-phosphohistidine intermediate is histidine 115.

It belongs to the NDK family. Mg(2+) is required as a cofactor.

Its subcellular location is the cytoplasm. It catalyses the reaction a 2'-deoxyribonucleoside 5'-diphosphate + ATP = a 2'-deoxyribonucleoside 5'-triphosphate + ADP. It carries out the reaction a ribonucleoside 5'-diphosphate + ATP = a ribonucleoside 5'-triphosphate + ADP. Major role in the synthesis of nucleoside triphosphates other than ATP. The ATP gamma phosphate is transferred to the NDP beta phosphate via a ping-pong mechanism, using a phosphorylated active-site intermediate. This Methanococcoides burtonii (strain DSM 6242 / NBRC 107633 / OCM 468 / ACE-M) protein is Nucleoside diphosphate kinase.